Reading from the N-terminus, the 188-residue chain is MGKYYCDYCDVFLVSESPSVRKAHNSGRNHLTNVRDYYSSLGHDKAQSYIDEITRMFETGGGNSTSNRGPGGNPPGSQPGPPNAGMSGPMRPPFSNSTAGPNMPPLPPAMLALMNGQNGMSSPGSGPPPMRFAGPPIPNNMPPGMMQPPHVNGYSSGPLPPQPQPASGGQGAPPLTARMNPDRARQLG.

Residues 4-36 (YYCDYCDVFLVSESPSVRKAHNSGRNHLTNVRD) form a Matrin-type zinc finger. The segment at 57-188 (FETGGGNSTS…MNPDRARQLG (132 aa)) is disordered. The span at 72–82 (GNPPGSQPGPP) shows a compositional bias: pro residues. The span at 109–124 (AMLALMNGQNGMSSPG) shows a compositional bias: low complexity. The segment covering 125-141 (SGPPPMRFAGPPIPNNM) has biased composition (pro residues).

This sequence belongs to the U1 small nuclear ribonucleoprotein C family. As to quaternary structure, U1 snRNP is composed of the 7 core Sm proteins B/B', D1, D2, D3, E, F and G that assemble in a heptameric protein ring on the Sm site of the small nuclear RNA to form the core snRNP, and at least 3 U1 snRNP-specific proteins U1-70K, U1-A and U1-C. U1-C interacts with U1 snRNA and the 5' splice-site region of the pre-mRNA.

It localises to the nucleus. In terms of biological role, component of the spliceosomal U1 snRNP, which is essential for recognition of the pre-mRNA 5' splice-site and the subsequent assembly of the spliceosome. U1-C is directly involved in initial 5' splice-site recognition for both constitutive and regulated alternative splicing. The interaction with the 5' splice-site seems to precede base-pairing between the pre-mRNA and the U1 snRNA. Stimulates commitment or early (E) complex formation by stabilizing the base pairing of the 5' end of the U1 snRNA and the 5' splice-site region. The polypeptide is U1 small nuclear ribonucleoprotein C-2 (Puccinia graminis f. sp. tritici (strain CRL 75-36-700-3 / race SCCL) (Black stem rust fungus)).